A 381-amino-acid polypeptide reads, in one-letter code: Transaldolase 1 (381 aa).

Catalysis depends on Lys149, which acts as the Schiff-base intermediate with substrate.

It belongs to the transaldolase family. Type 2 subfamily.

It localises to the cytoplasm. The enzyme catalyses D-sedoheptulose 7-phosphate + D-glyceraldehyde 3-phosphate = D-erythrose 4-phosphate + beta-D-fructose 6-phosphate. Its pathway is carbohydrate degradation; pentose phosphate pathway; D-glyceraldehyde 3-phosphate and beta-D-fructose 6-phosphate from D-ribose 5-phosphate and D-xylulose 5-phosphate (non-oxidative stage): step 2/3. In terms of biological role, transaldolase is important for the balance of metabolites in the pentose-phosphate pathway. This is Transaldolase 1 (tal1) from Streptomyces coelicolor (strain ATCC BAA-471 / A3(2) / M145).